The chain runs to 442 residues: ATP-dependent protease ATPase subunit HslU (442 aa).

ATP-binding positions include I18, 60–65, D255, E320, and R392; that span reads GVGKTE.

The protein belongs to the ClpX chaperone family. HslU subfamily. A double ring-shaped homohexamer of HslV is capped on each side by a ring-shaped HslU homohexamer. The assembly of the HslU/HslV complex is dependent on binding of ATP.

Its subcellular location is the cytoplasm. ATPase subunit of a proteasome-like degradation complex; this subunit has chaperone activity. The binding of ATP and its subsequent hydrolysis by HslU are essential for unfolding of protein substrates subsequently hydrolyzed by HslV. HslU recognizes the N-terminal part of its protein substrates and unfolds these before they are guided to HslV for hydrolysis. The sequence is that of ATP-dependent protease ATPase subunit HslU from Shewanella putrefaciens (strain CN-32 / ATCC BAA-453).